The chain runs to 171 residues: Transcription factor E (171 aa).

The 84-residue stretch at 5 to 88 (YEDPFIRIAV…RWRSRREEVE (84 aa)) folds into the HTH TFE/IIEalpha-type domain.

The protein belongs to the TFE family. As to quaternary structure, monomer. Interaction with RNA polymerase subunits RpoF and RpoE is necessary for Tfe stimulatory transcription activity. Able to interact with Tbp and RNA polymerase in the absence of DNA promoter. Interacts both with the preinitiation and elongation complexes.

Transcription factor that plays a role in the activation of archaeal genes transcribed by RNA polymerase. Facilitates transcription initiation by enhancing TATA-box recognition by TATA-box-binding protein (Tbp), and transcription factor B (Tfb) and RNA polymerase recruitment. Not absolutely required for transcription in vitro, but particularly important in cases where Tbp or Tfb function is not optimal. It dynamically alters the nucleic acid-binding properties of RNA polymerases by stabilizing the initiation complex and destabilizing elongation complexes. Seems to translocate with the RNA polymerase following initiation and acts by binding to the non template strand of the transcription bubble in elongation complexes. The chain is Transcription factor E from Cenarchaeum symbiosum (strain A).